A 275-amino-acid chain; its full sequence is MNSTSNLIEQVIEAWQNMQAKTPLVQCITNSVAANYTANVLLASGASPAMIDNPYEAESFTKISSALSINLGTPTSEQMQAMQISAKTAQLNNVPWVLDPVGYGPILAWRSQMTDELLQFKPSVIRGNASEISTLAGNQVQSKGVDSTLSSDQAYQQAFSLLTHASCIAISGESDYILSNEVDAVIQVNGGSPLQPKITATGCALGALIAAYSAVTTPTIAALSAHIHFAIAGKLAANQAQTMGSFSSIFMDYIHMLDANLIEQYADVKLLNKQA.

Residue Met50 participates in substrate binding. Residues Arg126 and Ser171 each coordinate ATP. Residue Ala200 coordinates substrate.

It belongs to the Thz kinase family. Requires Mg(2+) as cofactor.

It carries out the reaction 5-(2-hydroxyethyl)-4-methylthiazole + ATP = 4-methyl-5-(2-phosphooxyethyl)-thiazole + ADP + H(+). Its pathway is cofactor biosynthesis; thiamine diphosphate biosynthesis; 4-methyl-5-(2-phosphoethyl)-thiazole from 5-(2-hydroxyethyl)-4-methylthiazole: step 1/1. In terms of biological role, catalyzes the phosphorylation of the hydroxyl group of 4-methyl-5-beta-hydroxyethylthiazole (THZ). The chain is Hydroxyethylthiazole kinase from Acinetobacter baumannii (strain AB307-0294).